A 79-amino-acid chain; its full sequence is Large ribosomal subunit protein bL31 (79 aa).

This sequence belongs to the bacterial ribosomal protein bL31 family. Type A subfamily. As to quaternary structure, part of the 50S ribosomal subunit.

Binds the 23S rRNA. The protein is Large ribosomal subunit protein bL31 of Nostoc sp. (strain PCC 7120 / SAG 25.82 / UTEX 2576).